The sequence spans 65 residues: Oxiana weak toxin (65 aa).

5 disulfide bridges follow: Cys-3/Cys-24, Cys-6/Cys-11, Cys-17/Cys-42, Cys-46/Cys-57, and Cys-58/Cys-63.

Belongs to the three-finger toxin family. Ancestral subfamily. Orphan group II sub-subfamily. Expressed by the venom gland.

The protein localises to the secreted. Functionally, binds to muscle and neuronal nicotinic acetylcholine receptors (nAChR). It binds to extracellular domain of rat alpha-7/CHRNA7 nAChR (IC(50)=2.2 uM) and to Torpedo californica membranes (IC(50)=30 uM). This Naja oxiana (Central Asian cobra) protein is Oxiana weak toxin.